The sequence spans 186 residues: Adenine phosphoribosyltransferase (186 aa).

Belongs to the purine/pyrimidine phosphoribosyltransferase family. Homodimer.

It localises to the cytoplasm. The catalysed reaction is AMP + diphosphate = 5-phospho-alpha-D-ribose 1-diphosphate + adenine. The protein operates within purine metabolism; AMP biosynthesis via salvage pathway; AMP from adenine: step 1/1. Catalyzes a salvage reaction resulting in the formation of AMP, that is energically less costly than de novo synthesis. This chain is Adenine phosphoribosyltransferase, found in Xanthomonas campestris pv. campestris (strain 8004).